The sequence spans 495 residues: Phytochrome A type 5 (495 aa).

Positions 1–21 are enriched in low complexity; sequence MSSSRPASSSSSRNRQSSQAR. A disordered region spans residues 1-24; sequence MSSSRPASSSSSRNRQSSQARVLA. One can recognise a GAF domain in the interval 217–402; sequence SMEMLCNTVV…VFAVHVNREF (186 aa). A phytochromobilin-binding site is contributed by cysteine 322.

It belongs to the phytochrome family. As to quaternary structure, homodimer. In terms of processing, contains one covalently linked phytochromobilin chromophore.

In terms of biological role, regulatory photoreceptor which exists in two forms that are reversibly interconvertible by light: the Pr form that absorbs maximally in the red region of the spectrum and the Pfr form that absorbs maximally in the far-red region. Photoconversion of Pr to Pfr induces an array of morphogenic responses, whereas reconversion of Pfr to Pr cancels the induction of those responses. Pfr controls the expression of a number of nuclear genes including those encoding the small subunit of ribulose-bisphosphate carboxylase, chlorophyll A/B binding protein, protochlorophyllide reductase, rRNA, etc. It also controls the expression of its own gene(s) in a negative feedback fashion. This chain is Phytochrome A type 5 (PHYA5), found in Avena sativa (Oat).